Here is a 372-residue protein sequence, read N- to C-terminus: N-methyl-L-tryptophan oxidase (372 aa).

4 to 34 (DLIIIGSGSVGAAAGYYATRAGLNVLMTDAH) lines the FAD pocket. Cysteine 308 carries the post-translational modification S-8alpha-FAD cysteine.

Belongs to the MSOX/MTOX family. MTOX subfamily. Monomer. FAD is required as a cofactor.

It catalyses the reaction N(alpha)-methyl-L-tryptophan + O2 + H2O = L-tryptophan + formaldehyde + H2O2. Functionally, catalyzes the oxidative demethylation of N-methyl-L-tryptophan. The protein is N-methyl-L-tryptophan oxidase of Escherichia coli (strain K12 / DH10B).